The primary structure comprises 311 residues: Tyrosine recombinase XerC (311 aa).

Residues 14 to 100 enclose the Core-binding (CB) domain; that stretch reads ESLNETAKKF…SLRTFYKVLL (87 aa). A Tyr recombinase domain is found at 121–303; the sequence is EVPKNFRINE…SKEKIKEVYR (183 aa). Active-site residues include arginine 163, lysine 187, histidine 255, arginine 258, and histidine 281. Catalysis depends on tyrosine 290, which acts as the O-(3'-phospho-DNA)-tyrosine intermediate.

This sequence belongs to the 'phage' integrase family. XerC subfamily. As to quaternary structure, forms a cyclic heterotetrameric complex composed of two molecules of XerC and two molecules of XerD.

Its subcellular location is the cytoplasm. Functionally, site-specific tyrosine recombinase, which acts by catalyzing the cutting and rejoining of the recombining DNA molecules. The XerC-XerD complex is essential to convert dimers of the bacterial chromosome into monomers to permit their segregation at cell division. It also contributes to the segregational stability of plasmids. In Leptospira interrogans serogroup Icterohaemorrhagiae serovar copenhageni (strain Fiocruz L1-130), this protein is Tyrosine recombinase XerC.